Here is a 1478-residue protein sequence, read N- to C-terminus: Adhesion G protein-coupled receptor L2 (1478 aa).

The N-terminal stretch at 1 to 25 (MVSSGCRMRSLWFIIIISFLPNTEG) is a signal peptide. Over 26-855 (FSRAALPFGL…VHELLLTVIT (830 aa)) the chain is Extracellular. The region spanning 41–130 (SCEGYSIDLR…KYLEVQYECV (90 aa)) is the SUEL-type lectin domain. Asn-99 carries an N-linked (GlcNAc...) asparagine glycan. The Olfactomedin-like domain occupies 139-398 (VCPGTLKAIV…ILRYSLEFGP (260 aa)). Cys-140 and Cys-322 are disulfide-bonded. N-linked (GlcNAc...) asparagine glycosylation is present at Asn-335. The disordered stretch occupies residues 422 to 458 (VSTTSTTSQKGPMSTTVAGSQEGSKGTKAPPAVSTTK). Residues 430-445 (QKGPMSTTVAGSQEGS) are compositionally biased toward polar residues. 7 N-linked (GlcNAc...) asparagine glycosylation sites follow: Asn-524, Asn-633, Asn-735, Asn-748, Asn-791, Asn-796, and Asn-817. A GAIN-B domain is found at 663–841 (TRVSMPTENI…AILMAHREIA (179 aa)). Intrachain disulfides connect Cys-792–Cys-823 and Cys-811–Cys-825. The GPS stretch occupies residues 792-841 (CSFWNYSERTMMGYWSTQGCKLVDTNKTRTTCACSHLTNFAILMAHREIA). The helical transmembrane segment at 856–876 (WVGIVISLVCLAICIFTFCFF) threads the bilayer. Residues 877–884 (RGLQSDRN) are Cytoplasmic-facing. A helical membrane pass occupies residues 885-905 (TIHKNLCINLFIAEFIFLIGI). Over 906-911 (DKTKYM) the chain is Extracellular. Residues 912-932 (IACPIFAGLLHFFFLAAFAWM) form a helical membrane-spanning segment. At 933-955 (CLEGVQLYLMLVEVFESEYSRKK) the chain is on the cytoplasmic side. Residues 956–976 (YYYVAGYLFPATVVGVSAAID) traverse the membrane as a helical segment. The Extracellular segment spans residues 977–994 (YKSYGTEKACWLHVDNYF). A helical transmembrane segment spans residues 995–1015 (IWSFIGPVTFIILLNIIFLVI). The Cytoplasmic portion of the chain corresponds to 1016 to 1056 (TLCKMVKHSNTLKPDSSRLENINNYRVCDGYYNTDLPGSWV). The helical transmembrane segment at 1057 to 1077 (LGAFALLCLLGLTWSFGLLFI) threads the bilayer. At 1078–1081 (NEET) the chain is on the extracellular side. Residues 1082-1102 (IVMAYLFTIFNAFQGVFIFIF) traverse the membrane as a helical segment. The Cytoplasmic portion of the chain corresponds to 1103-1478 (HCALQKKVRK…EGQMQLVTSL (376 aa)). A disordered region spans residues 1378-1419 (AEDHLQSPNRDSLYTSMPNLRDSPYQESSPDMEEDLSPSRRS). The segment covering 1383–1395 (QSPNRDSLYTSMP) has biased composition (polar residues). Phosphoserine occurs at positions 1393, 1428, and 1449.

Belongs to the G-protein coupled receptor 2 family. Adhesion G-protein coupled receptor (ADGR) subfamily. In terms of assembly, heterodimer of 2 chains generated by proteolytic processing; the large extracellular N-terminal fragment and the membrane-bound C-terminal fragment predominantly remain associated and non-covalently linked. Autoproteolytically processed at the GPS region of the GAIN-B domain; this cleavage modulates receptor activity. Ubiquitously expressed.

The protein localises to the postsynaptic cell membrane. With respect to regulation, forms a heterodimer of 2 chains generated by proteolytic processing that remain associated through non-covalent interactions mediated by the GAIN-B domain. In the inactivated receptor, the Stachel sequence (also named stalk) is embedded in the GAIN-B domain, where it adopts a beta-strand conformation. On activation, the Stachel moves into the 7 transmembrane region and adopts a twisted hook-shaped configuration that forms contacts within the receptor, leading to coupling of a G-alpha protein, which activates signaling. The cleaved GAIN-B and N-terminal domains can then dissociate from the rest of the receptor. Functionally, orphan adhesion G-protein coupled receptor (aGPCR), which mediates synapse specificity. Ligand binding causes a conformation change that triggers signaling via guanine nucleotide-binding proteins (G proteins) and modulates the activity of downstream effectors. Following G-protein coupled receptor activation, associates with cell adhesion molecules that are expressed at the surface of adjacent cells to direct synapse specificity. Specifically mediates the establishment of perforant-path synapses on CA1-region pyramidal neurons in the hippocampus. Localizes to postsynaptic spines in excitatory synapses in the S.lacunosum-moleculare and interacts with presynaptic cell adhesion molecules, such as teneurins, promoting synapse formation. The protein is Adhesion G protein-coupled receptor L2 (ADGRL2) of Bos taurus (Bovine).